The following is a 148-amino-acid chain: FAD synthase (148 aa).

ATP contacts are provided by residues 14 to 15 (VF), 19 to 22 (HAGH), and aspartate 100.

It belongs to the archaeal FAD synthase family. As to quaternary structure, homodimer. The cofactor is a divalent metal cation.

The catalysed reaction is FMN + ATP + H(+) = FAD + diphosphate. It functions in the pathway cofactor biosynthesis; FAD biosynthesis; FAD from FMN: step 1/1. In terms of biological role, catalyzes the transfer of the AMP portion of ATP to flavin mononucleotide (FMN) to produce flavin adenine dinucleotide (FAD) coenzyme. The protein is FAD synthase of Pyrococcus horikoshii (strain ATCC 700860 / DSM 12428 / JCM 9974 / NBRC 100139 / OT-3).